An 841-amino-acid chain; its full sequence is Probable alpha-glucuronidase A (841 aa).

An N-terminal signal peptide occupies residues 1 to 20 (MRGLNLFQLILALLLSMVAA). 15 N-linked (GlcNAc...) asparagine glycosylation sites follow: Asn-51, Asn-76, Asn-85, Asn-149, Asn-222, Asn-279, Asn-310, Asn-343, Asn-450, Asn-465, Asn-527, Asn-576, Asn-682, Asn-723, and Asn-732.

It belongs to the glycosyl hydrolase 67 family.

Its subcellular location is the secreted. It carries out the reaction an alpha-D-glucuronoside + H2O = D-glucuronate + an alcohol. Its function is as follows. Alpha-glucuronidase involved in the hydrolysis of xylan, a major structural heterogeneous polysaccharide found in plant biomass representing the second most abundant polysaccharide in the biosphere, after cellulose. Releases 4-O-methylglucuronic acid from xylan. The polypeptide is Probable alpha-glucuronidase A (aguA) (Aspergillus niger).